A 206-amino-acid polypeptide reads, in one-letter code: Cytidylate kinase (206 aa).

9–17 (GPAAAGKGT) is an ATP binding site.

Belongs to the cytidylate kinase family. Type 1 subfamily.

It is found in the cytoplasm. It carries out the reaction CMP + ATP = CDP + ADP. The catalysed reaction is dCMP + ATP = dCDP + ADP. The sequence is that of Cytidylate kinase from Cereibacter sphaeroides (strain ATCC 17023 / DSM 158 / JCM 6121 / CCUG 31486 / LMG 2827 / NBRC 12203 / NCIMB 8253 / ATH 2.4.1.) (Rhodobacter sphaeroides).